The sequence spans 348 residues: Endoglucanase-6B (348 aa).

The substrate site is built by W52 and S54. Catalysis depends on proton donor residues D92 and D139. Substrate is bound by residues N183, W186, N222, W282, K310, and E314. The span at 222 to 241 (NYNPYSTSNPPPYTSGSPSP) shows a compositional bias: low complexity. A disordered region spans residues 222–244 (NYNPYSTSNPPPYTSGSPSPDES).

The protein belongs to the glycosyl hydrolase 6 (cellulase B) family. In terms of assembly, monomer.

It catalyses the reaction Endohydrolysis of (1-&gt;4)-beta-D-glucosidic linkages in cellulose, lichenin and cereal beta-D-glucans.. Its function is as follows. Plays a central role in the recycling of plant biomass. The biological conversion of cellulose to glucose generally requires three types of hydrolytic enzymes: (1) Endoglucanases which cut internal beta-1,4-glucosidic bonds; (2) Exocellobiohydrolases that cut the disaccharide cellobiose from the non-reducing end of the cellulose polymer chain; (3) Beta-1,4-glucosidases which hydrolyze the cellobiose and other short cello-oligosaccharides to glucose. In Humicola insolens (Soft-rot fungus), this protein is Endoglucanase-6B.